The chain runs to 254 residues: Ribosomal RNA small subunit methyltransferase J (254 aa).

Residues 107–108, 123–124, and Asp-174 each bind S-adenosyl-L-methionine; these read RD and ER.

Belongs to the methyltransferase superfamily. RsmJ family.

It localises to the cytoplasm. It catalyses the reaction guanosine(1516) in 16S rRNA + S-adenosyl-L-methionine = N(2)-methylguanosine(1516) in 16S rRNA + S-adenosyl-L-homocysteine + H(+). In terms of biological role, specifically methylates the guanosine in position 1516 of 16S rRNA. This Coxiella burnetii (strain CbuK_Q154) (Coxiella burnetii (strain Q154)) protein is Ribosomal RNA small subunit methyltransferase J.